The sequence spans 128 residues: Fluoride-specific ion channel FluC (128 aa).

A run of 4 helical transmembrane segments spans residues 5–25 (IVAIFVGAGLGALLRWFLSIG), 35–55 (LGTLASNLIGGYLIGIAVVAF), 67–87 (LFVITGFMGGLTTFSTYSVEV), and 96–116 (FGWALAVAALHLIGSFTLTGL). Positions 75 and 78 each coordinate Na(+).

The protein belongs to the fluoride channel Fluc/FEX (TC 1.A.43) family.

Its subcellular location is the cell inner membrane. It carries out the reaction fluoride(in) = fluoride(out). With respect to regulation, na(+) is not transported, but it plays an essential structural role and its presence is essential for fluoride channel function. Its function is as follows. Fluoride-specific ion channel. Important for reducing fluoride concentration in the cell, thus reducing its toxicity. This chain is Fluoride-specific ion channel FluC, found in Burkholderia pseudomallei (strain 1106a).